A 158-amino-acid polypeptide reads, in one-letter code: Na(+)/H(+) antiporter subunit E (158 aa).

A run of 2 helical transmembrane segments spans residues 21 to 41 and 51 to 71; these read SPSA…LFFF and LWKL…LYLA.

It belongs to the CPA3 antiporters (TC 2.A.63) subunit E family. As to quaternary structure, forms a heterooligomeric complex that consists of seven subunits: MrpA, MrpB, MrpC, MrpD, MrpE, MrpF and MrpG.

It is found in the cell membrane. In terms of biological role, mrp complex is a Na(+)/H(+) antiporter that is considered to be the major Na(+) excretion system in B.subtilis. Has a major role in Na(+) resistance and a minor role in Na(+)- and K(+)-dependent pH homeostasis as compared to TetB. MrpA may be the actual Na(+)/H(+) antiporter, although the six other Mrp proteins are all required for Na(+)/H(+) antiport activity and Na(+) resistance. MrpA is required for initiation of sporulation when external Na(+) concentration increases. Also transports Li(+) but not K(+), Ca(2+) or Mg(2+). In Bacillus subtilis (strain 168), this protein is Na(+)/H(+) antiporter subunit E (mrpE).